A 446-amino-acid chain; its full sequence is MSSMTPQEIVSELDRHIVGQNGAKRAVAIALRNRWRRQQVDASLRHEITPKNILMIGPTGVGKTEIARRLARLADAPFIKVEATKFTEVGYVGKDVDSIVRDLVEVAVKQTREADMKKVRVRAEDAAEDRILDVLIPPARGAGVDTARTGEPAGDSTARQVFRKKLREGQLDDKEIEIDLADARPQFEIMSPAGMEEMTEQLRGMFSQMGQERRRARKLKIAEAMKLLVEEEAAKLVNEEEVKTRALANAEQNGIVFIDEIDKVASRQEAGGADVSRQGVQRDLLPLVEGTTVSTKYGMVKTDHILFIASGAFHLAKPSDLIPELQGRFPIRVELTSLSVQDFEAILTQTHASLVKQYQALLETEGVTLDFTPEGITRLAHIAFEVNERTENIGARRLSTVMERLLDEVSYDATRLSGQTVVVDAGYVNARLQSLSQDEDLSRYIL.

Residues V18, 60–65 (GVGKTE), D259, E324, and R396 contribute to the ATP site.

It belongs to the ClpX chaperone family. HslU subfamily. A double ring-shaped homohexamer of HslV is capped on each side by a ring-shaped HslU homohexamer. The assembly of the HslU/HslV complex is dependent on binding of ATP.

It is found in the cytoplasm. In terms of biological role, ATPase subunit of a proteasome-like degradation complex; this subunit has chaperone activity. The binding of ATP and its subsequent hydrolysis by HslU are essential for unfolding of protein substrates subsequently hydrolyzed by HslV. HslU recognizes the N-terminal part of its protein substrates and unfolds these before they are guided to HslV for hydrolysis. The polypeptide is ATP-dependent protease ATPase subunit HslU (Acidovorax sp. (strain JS42)).